A 117-amino-acid chain; its full sequence is Large ribosomal subunit protein bL20 (117 aa).

It belongs to the bacterial ribosomal protein bL20 family.

Its function is as follows. Binds directly to 23S ribosomal RNA and is necessary for the in vitro assembly process of the 50S ribosomal subunit. It is not involved in the protein synthesizing functions of that subunit. This Idiomarina loihiensis (strain ATCC BAA-735 / DSM 15497 / L2-TR) protein is Large ribosomal subunit protein bL20.